A 60-amino-acid chain; its full sequence is Large ribosomal subunit protein bL32 (60 aa).

Residues 1-23 (MAVPRNRHSNARKNIRRSHHAKQ) form a disordered region.

It belongs to the bacterial ribosomal protein bL32 family.

The protein is Large ribosomal subunit protein bL32 of Chlamydia abortus (strain DSM 27085 / S26/3) (Chlamydophila abortus).